The primary structure comprises 305 residues: Serine/threonine-protein phosphatase PP1-delta (305 aa).

Asp62, His64, Asp90, and Asn122 together coordinate Mn(2+). His123 (proton donor) is an active-site residue. Mn(2+) contacts are provided by His172 and His247.

Belongs to the PPP phosphatase family. As to expression, expressed in male germline including spermatocytes, spermatids and spermatozoa.

The protein resides in the chromosome. The protein localises to the cell projection. It is found in the pseudopodium. It localises to the cytoplasm. It carries out the reaction O-phospho-L-seryl-[protein] + H2O = L-seryl-[protein] + phosphate. It catalyses the reaction O-phospho-L-threonyl-[protein] + H2O = L-threonyl-[protein] + phosphate. Functionally, probable phosphatase which plays a redundant role with gsp-4 in spermatogenesis by regulating sister chromatid segregation during meiosis. In addition, involved in sperm motility by controlling the dynamic disassembly of major sperm proteins (MSP) in the spermatozoan pseudopodium. In Caenorhabditis elegans, this protein is Serine/threonine-protein phosphatase PP1-delta.